Here is a 287-residue protein sequence, read N- to C-terminus: Bifunctional protein FolD (287 aa).

NADP(+)-binding positions include 165-167, Ser-190, and Ile-233; that span reads NRS.

Belongs to the tetrahydrofolate dehydrogenase/cyclohydrolase family. In terms of assembly, homodimer.

It carries out the reaction (6R)-5,10-methylene-5,6,7,8-tetrahydrofolate + NADP(+) = (6R)-5,10-methenyltetrahydrofolate + NADPH. It catalyses the reaction (6R)-5,10-methenyltetrahydrofolate + H2O = (6R)-10-formyltetrahydrofolate + H(+). The protein operates within one-carbon metabolism; tetrahydrofolate interconversion. Functionally, catalyzes the oxidation of 5,10-methylenetetrahydrofolate to 5,10-methenyltetrahydrofolate and then the hydrolysis of 5,10-methenyltetrahydrofolate to 10-formyltetrahydrofolate. The protein is Bifunctional protein FolD of Nitrosopumilus maritimus (strain SCM1).